The sequence spans 66 residues: Large ribosomal subunit protein uL29 (66 aa).

This sequence belongs to the universal ribosomal protein uL29 family.

This chain is Large ribosomal subunit protein uL29, found in Francisella philomiragia subsp. philomiragia (strain ATCC 25017 / CCUG 19701 / FSC 153 / O#319-036).